Consider the following 102-residue polypeptide: Cytochrome c-553 (102 aa).

The first 23 residues, 1-23 (MKRILVVMSICAALAFGVSAAMA), serve as a signal peptide directing secretion. Positions 33, 36, 37, and 80 each coordinate heme c.

Binds 1 heme c group covalently per subunit.

It localises to the periplasm. Functionally, natural electron acceptor for a formate dehydrogenase. The polypeptide is Cytochrome c-553 (Nitratidesulfovibrio vulgaris (strain DSM 19637 / Miyazaki F) (Desulfovibrio vulgaris)).